Consider the following 84-residue polypeptide: Small ribosomal subunit protein uS17 (84 aa).

The protein belongs to the universal ribosomal protein uS17 family. Part of the 30S ribosomal subunit.

In terms of biological role, one of the primary rRNA binding proteins, it binds specifically to the 5'-end of 16S ribosomal RNA. The polypeptide is Small ribosomal subunit protein uS17 (Clostridium perfringens (strain ATCC 13124 / DSM 756 / JCM 1290 / NCIMB 6125 / NCTC 8237 / Type A)).